Reading from the N-terminus, the 413-residue chain is DNA polymerase IV 1 (413 aa).

In terms of domain architecture, UmuC spans 7 to 188; that stretch reads IFHVDMNSFY…LPIEEMYGIG (182 aa). Mg(2+)-binding residues include Asp-11 and Asp-107. The active site involves Glu-108.

The protein belongs to the DNA polymerase type-Y family. In terms of assembly, monomer. It depends on Mg(2+) as a cofactor.

The protein localises to the cytoplasm. It catalyses the reaction DNA(n) + a 2'-deoxyribonucleoside 5'-triphosphate = DNA(n+1) + diphosphate. Functionally, poorly processive, error-prone DNA polymerase involved in untargeted mutagenesis. Copies undamaged DNA at stalled replication forks, which arise in vivo from mismatched or misaligned primer ends. These misaligned primers can be extended by PolIV. Exhibits no 3'-5' exonuclease (proofreading) activity. May be involved in translesional synthesis, in conjunction with the beta clamp from PolIII. This chain is DNA polymerase IV 1 (dinB1), found in Halalkalibacterium halodurans (strain ATCC BAA-125 / DSM 18197 / FERM 7344 / JCM 9153 / C-125) (Bacillus halodurans).